A 1199-amino-acid chain; its full sequence is Chromosome partition protein Smc (1199 aa).

Residue 32-39 (PNGSGKSN) participates in ATP binding. Residues 192 to 528 (GVAEFDEKSE…NARIKTLKDM (337 aa)) are a coiled coil. Residues 546–658 (PGVVDIAGNL…VDNLENAKKL (113 aa)) enclose the SMC hinge domain. The stretch at 691–1051 (IKVDIDMKKL…YLQLISEVQK (361 aa)) forms a coiled coil.

Belongs to the SMC family. As to quaternary structure, homodimer.

It is found in the cytoplasm. Functionally, required for chromosome condensation and partitioning. This is Chromosome partition protein Smc from Methanococcus voltae.